The sequence spans 410 residues: MVLSQRQRDELNRAIADYLRSNGYEEAYSTFKKEAELDMNEELDKKYAGLLEKKWTSVIRLQKKVMELESKLNEAKEEITLGGPIAQKRDPKEWIPRPPEKYALSGHRSPVTRVIFHPVFSVMVSASEDATIKVWDYETGDFERTLKGHTDSVQDISFDHTGKLLASCSADMTIKLWDFQGFECIRTMHGHDHNVSSVAIMPNGDHIVSASRDKTIKMWEVATGYCVKTFTGHREWVRMVRPNQDGTLIASCSNDQTVRVWVVASKECKAELREHEHVVECISWAPESAHPTILEATGSESKKSGKPGPFLLSGSRDKTIKMWDVSIGMCLMTLVGHDNWVRGMLVHPGGKFILSCADDKTLRIWDYKNKRCMKTLGAHEHFVTSLDFHKNAPYVVTGSVDQTVKVWECR.

Residues 7–39 (QRDELNRAIADYLRSNGYEEAYSTFKKEAELDM) enclose the LisH domain. Positions 56–82 (TSVIRLQKKVMELESKLNEAKEEITLG) form a coiled coil. 7 WD repeats span residues 106–147 (GHRS…RTLK), 148–187 (GHTDSVQDISFDHTGKLLASCSADMTIKLWDFQGFECIRT), 190–229 (GHDHNVSSVAIMPNGDHIVSASRDKTIKMWEVATGYCVKT), 232–271 (GHREWVRMVRPNQDGTLIASCSNDQTVRVWVVASKECKAE), 274–333 (EHEH…CLMT), 336–375 (GHDNWVRGMLVHPGGKFILSCADDKTLRIWDYKNKRCMKT), and 378–410 (AHEHFVTSLDFHKNAPYVVTGSVDQTVKVWECR).

The protein belongs to the WD repeat LIS1/nudF family. As to quaternary structure, can self-associate. Component of the cytosolic PAF-AH (I) heterotetrameric enzyme, which is composed of PAFAH1B1 (beta), PAFAH1B2 (alpha2) and PAFAH1B3 (alpha1) subunits. The catalytic activity of the enzyme resides in the alpha1 (PAFAH1B3) and alpha2 (PAFAH1B2) subunits, whereas the beta subunit (PAFAH1B1) has regulatory activity. Trimer formation is not essential for the catalytic activity. Interacts with dynein, dynactin, nde1 and ndel1.

It is found in the cytoplasm. The protein resides in the cytoskeleton. It localises to the microtubule organizing center. The protein localises to the centrosome. In terms of biological role, regulatory subunit (beta subunit) of the cytosolic type I platelet-activating factor (PAF) acetylhydrolase (PAF-AH (I)), an enzyme that catalyzes the hydrolyze of the acetyl group at the sn-2 position of PAF and its analogs and participates in PAF inactivation. Regulates the PAF-AH (I) activity in a catalytic dimer composition-dependent manner. Positively regulates the activity of the minus-end directed microtubule motor protein dynein. May enhance dynein-mediated microtubule sliding by targeting dynein to the microtubule plus end. Required for several dynein- and microtubule-dependent processes such as the maintenance of Golgi integrity, the peripheral transport of microtubule fragments and the coupling of the nucleus and centrosome. May be required for proliferation of neuronal precursors and neuronal migration. The sequence is that of Lissencephaly-1 homolog A (pafah1b1-1) from Salmo salar (Atlantic salmon).